An 865-amino-acid chain; its full sequence is Alanine--tRNA ligase (865 aa).

Positions 556, 560, 660, and 664 each coordinate Zn(2+).

Belongs to the class-II aminoacyl-tRNA synthetase family. Zn(2+) serves as cofactor.

It is found in the cytoplasm. It catalyses the reaction tRNA(Ala) + L-alanine + ATP = L-alanyl-tRNA(Ala) + AMP + diphosphate. In terms of biological role, catalyzes the attachment of alanine to tRNA(Ala) in a two-step reaction: alanine is first activated by ATP to form Ala-AMP and then transferred to the acceptor end of tRNA(Ala). Also edits incorrectly charged Ser-tRNA(Ala) and Gly-tRNA(Ala) via its editing domain. The polypeptide is Alanine--tRNA ligase (Ruthia magnifica subsp. Calyptogena magnifica).